A 289-amino-acid polypeptide reads, in one-letter code: Glycine--tRNA ligase alpha subunit (289 aa).

Belongs to the class-II aminoacyl-tRNA synthetase family. As to quaternary structure, tetramer of two alpha and two beta subunits.

It is found in the cytoplasm. The enzyme catalyses tRNA(Gly) + glycine + ATP = glycyl-tRNA(Gly) + AMP + diphosphate. This is Glycine--tRNA ligase alpha subunit from Rickettsia typhi (strain ATCC VR-144 / Wilmington).